A 316-amino-acid chain; its full sequence is N-acetylmuramic acid 6-phosphate etherase (316 aa).

An SIS domain is found at Ile68–Lys231. Residue Glu96 is the Proton donor of the active site. Residue Glu127 is part of the active site.

This sequence belongs to the GCKR-like family. MurNAc-6-P etherase subfamily. Homodimer.

It carries out the reaction N-acetyl-D-muramate 6-phosphate + H2O = N-acetyl-D-glucosamine 6-phosphate + (R)-lactate. Its pathway is amino-sugar metabolism; N-acetylmuramate degradation. Its function is as follows. Specifically catalyzes the cleavage of the D-lactyl ether substituent of MurNAc 6-phosphate, producing GlcNAc 6-phosphate and D-lactate. This Prochlorococcus marinus (strain MIT 9313) protein is N-acetylmuramic acid 6-phosphate etherase.